We begin with the raw amino-acid sequence, 260 residues long: tRNA pseudouridine synthase A (260 aa).

The active-site Nucleophile is D51. Position 109 (Y109) interacts with substrate.

This sequence belongs to the tRNA pseudouridine synthase TruA family. In terms of assembly, homodimer.

The catalysed reaction is uridine(38/39/40) in tRNA = pseudouridine(38/39/40) in tRNA. Functionally, formation of pseudouridine at positions 38, 39 and 40 in the anticodon stem and loop of transfer RNAs. This Methylibium petroleiphilum (strain ATCC BAA-1232 / LMG 22953 / PM1) protein is tRNA pseudouridine synthase A.